Here is a 65-residue protein sequence, read N- to C-terminus: MKISELRDKSLEELTQLLDEKQLDAFRIRMAKATGQLGNTHEVRVNRRAIAQLQTLINEKQRGDS.

This sequence belongs to the universal ribosomal protein uL29 family.

The chain is Large ribosomal subunit protein uL29 from Psychrobacter arcticus (strain DSM 17307 / VKM B-2377 / 273-4).